A 310-amino-acid polypeptide reads, in one-letter code: Cytochrome f (310 aa).

Positions 1–23 (MRRLLSSTFAALIVGLAVFSAPA) are cleaved as a signal peptide. Positions 28, 48, 51, and 52 each coordinate heme. A helical transmembrane segment spans residues 277–297 (IYGMLAFFAAVALAQIMLVLK).

This sequence belongs to the cytochrome f family. In terms of assembly, the 4 large subunits of the cytochrome b6-f complex are cytochrome b6, subunit IV (17 kDa polypeptide, PetD), cytochrome f and the Rieske protein, while the 4 small subunits are PetG, PetL, PetM and PetN. The complex functions as a dimer. Heme is required as a cofactor.

The protein resides in the cellular thylakoid membrane. In terms of biological role, component of the cytochrome b6-f complex, which mediates electron transfer between photosystem II (PSII) and photosystem I (PSI), cyclic electron flow around PSI, and state transitions. This chain is Cytochrome f, found in Synechococcus sp. (strain CC9311).